Reading from the N-terminus, the 164-residue chain is Large ribosomal subunit protein uL10 (164 aa).

It belongs to the universal ribosomal protein uL10 family. As to quaternary structure, part of the ribosomal stalk of the 50S ribosomal subunit. The N-terminus interacts with L11 and the large rRNA to form the base of the stalk. The C-terminus forms an elongated spine to which L12 dimers bind in a sequential fashion forming a multimeric L10(L12)X complex.

Forms part of the ribosomal stalk, playing a central role in the interaction of the ribosome with GTP-bound translation factors. The sequence is that of Large ribosomal subunit protein uL10 from Pseudoalteromonas translucida (strain TAC 125).